The primary structure comprises 282 residues: Anamorsin homolog (282 aa).

The segment at 5-151 is N-terminal SAM-like domain; sequence VDTNNFVLLL…EVGAKTALSL (147 aa). The linker stretch occupies residues 152–196; sequence SFAPKPAQPKAETSAAQIWTLSAQDIDDEDVDLLDSDTLLDEDDL. 4 residues coordinate [2Fe-2S] cluster: Cys-208, Cys-218, Cys-221, and Cys-223. The interval 208–223 is fe-S binding site A; the sequence is CGPGSGKKKACKNCTC. [4Fe-4S] cluster is bound by residues Cys-243, Cys-246, Cys-254, and Cys-257. 2 short sequence motifs (cx2C motif) span residues 243–246 and 254–257; these read CGSC and CSTC. The interval 243–257 is fe-S binding site B; sequence CGSCYLGDAFRCSTC.

This sequence belongs to the anamorsin family. As to quaternary structure, monomer. [2Fe-2S] cluster serves as cofactor. The cofactor is [4Fe-4S] cluster.

It localises to the cytoplasm. It is found in the mitochondrion intermembrane space. Functionally, component of the cytosolic iron-sulfur (Fe-S) protein assembly (CIA) machinery. Required for the maturation of extramitochondrial Fe-S proteins. Part of an electron transfer chain functioning in an early step of cytosolic Fe-S biogenesis, facilitating the de novo assembly of a [4Fe-4S] cluster on the cytosolic Fe-S scaffold complex. Electrons are transferred from NADPH via a FAD- and FMN-containing diflavin oxidoreductase. Together with the diflavin oxidoreductase, also required for the assembly of the diferric tyrosyl radical cofactor of ribonucleotide reductase (RNR), probably by providing electrons for reduction during radical cofactor maturation in the catalytic small subunit. This chain is Anamorsin homolog, found in Nematostella vectensis (Starlet sea anemone).